We begin with the raw amino-acid sequence, 593 residues long: ESX-1 secretion system protein EccCb1 (593 aa).

FtsK domains are found at residues 66–260 (RQEV…NETQ) and 350–546 (QVPL…EKND). Residues 85–92 (GAPQTGKS) and 377–384 (GAPKSGKT) contribute to the ATP site.

In terms of assembly, part of the ESX-1 / type VII secretion system (T7SS), which is composed of cytosolic and membrane components. The ESX-1 membrane complex is composed of EccB1, EccCa1, EccCb1, EccD1 and EccE1.

It is found in the cytoplasm. Functionally, part of the ESX-1 / type VII specialized secretion system (T7SS), which exports several proteins including EsxA and EsxB. Plays a role in DNA conjugation, in both donor and recipient strains. This Mycolicibacterium smegmatis (strain MKD8) (Mycobacterium smegmatis) protein is ESX-1 secretion system protein EccCb1 (eccCb1).